The chain runs to 847 residues: Pep5-like zinc finger protein C16A10.03c (847 aa).

The CHCR repeat unit spans residues 387-526 (YIEAIPFSDS…GIWLFNSDPM (140 aa)). Residues 780-814 (CDNCEGLLDVPFVSYSCLHLVHRDCATETVCPKCK) form an RING-type; atypical zinc finger.

The protein localises to the cytoplasm. It is found in the nucleus. In Schizosaccharomyces pombe (strain 972 / ATCC 24843) (Fission yeast), this protein is Pep5-like zinc finger protein C16A10.03c.